Reading from the N-terminus, the 483-residue chain is Cobyric acid synthase (483 aa).

One can recognise a GATase cobBQ-type domain in the interval A248–A434. C329 serves as the catalytic Nucleophile. The active site involves H426.

This sequence belongs to the CobB/CobQ family. CobQ subfamily.

The protein operates within cofactor biosynthesis; adenosylcobalamin biosynthesis. Catalyzes amidations at positions B, D, E, and G on adenosylcobyrinic A,C-diamide. NH(2) groups are provided by glutamine, and one molecule of ATP is hydrogenolyzed for each amidation. The protein is Cobyric acid synthase of Ectopseudomonas mendocina (strain ymp) (Pseudomonas mendocina).